The sequence spans 146 residues: NADH-quinone oxidoreductase subunit A (146 aa).

The next 3 membrane-spanning stretches (helical) occupy residues 4-24 (IYHW…VFML), 63-83 (LIAM…AWAI), and 91-111 (IGFS…IYLI).

It belongs to the complex I subunit 3 family. In terms of assembly, NDH-1 is composed of 13 different subunits. Subunits NuoA, H, J, K, L, M, N constitute the membrane sector of the complex.

It is found in the cell inner membrane. It catalyses the reaction a quinone + NADH + 5 H(+)(in) = a quinol + NAD(+) + 4 H(+)(out). NDH-1 shuttles electrons from NADH, via FMN and iron-sulfur (Fe-S) centers, to quinones in the respiratory chain. The immediate electron acceptor for the enzyme in this species is believed to be ubiquinone. Couples the redox reaction to proton translocation (for every two electrons transferred, four hydrogen ions are translocated across the cytoplasmic membrane), and thus conserves the redox energy in a proton gradient. In Blochmanniella pennsylvanica (strain BPEN), this protein is NADH-quinone oxidoreductase subunit A.